Reading from the N-terminus, the 262-residue chain is 5'-nucleotidase SurE (262 aa).

Residues Asp-11, Asp-12, Ser-43, and Asn-101 each coordinate a divalent metal cation.

This sequence belongs to the SurE nucleotidase family. A divalent metal cation serves as cofactor.

The protein resides in the cytoplasm. The enzyme catalyses a ribonucleoside 5'-phosphate + H2O = a ribonucleoside + phosphate. Functionally, nucleotidase that shows phosphatase activity on nucleoside 5'-monophosphates. This is 5'-nucleotidase SurE from Prochlorococcus marinus (strain NATL2A).